Here is a 116-residue protein sequence, read N- to C-terminus: U16-barytoxin-Tl1c (116 aa).

The first 20 residues, 1 to 20 (MKTIIVFLSLLVLATKFGDA), serve as a signal peptide directing secretion. The propeptide occupies 21–74 (NEGVNQEQMKEVIQNEFREDFLNEMAAMSLLQQLEAIESTLLEKEADRNSRQKR). Intrachain disulfides connect cysteine 75/cysteine 90, cysteine 82/cysteine 95, and cysteine 89/cysteine 110.

Belongs to the neurotoxin 14 (magi-1) family. 06 (ICK-Trit) subfamily. As to expression, expressed by the venom gland.

It is found in the secreted. In terms of biological role, ion channel inhibitor. The sequence is that of U16-barytoxin-Tl1c from Trittame loki (Brush-footed trapdoor spider).